We begin with the raw amino-acid sequence, 76 residues long: Candidate secreted effector protein MPL124497 (76 aa).

Positions 1–21 (MKLIIFAAISVAFMSFDQVLG) are cleaved as a signal peptide.

It belongs to the CPGH1 family.

It localises to the secreted. The protein resides in the host cell. Its subcellular location is the host cytoplasm. The protein localises to the host nucleus. Rust effector delivered into infected tissues to modulate host functions and contribute to pathogen virulence. Enhances leaf colonization by the bacteria Pseudomonas syringae and the oomycete Hyaloperonospora arabidopsidis pathogens in an Arabidopsis thaliana infection model. The chain is Candidate secreted effector protein MPL124497 from Melampsora larici-populina (strain 98AG31 / pathotype 3-4-7) (Poplar leaf rust fungus).